Reading from the N-terminus, the 384-residue chain is Chorismate synthase (384 aa).

R40 and R46 together coordinate NADP(+). FMN is bound by residues 127 to 129 (RTS), 247 to 248 (QA), A292, 307 to 311 (KPIPT), and R333.

Belongs to the chorismate synthase family. Homotetramer. It depends on FMNH2 as a cofactor.

The enzyme catalyses 5-O-(1-carboxyvinyl)-3-phosphoshikimate = chorismate + phosphate. Its pathway is metabolic intermediate biosynthesis; chorismate biosynthesis; chorismate from D-erythrose 4-phosphate and phosphoenolpyruvate: step 7/7. In terms of biological role, catalyzes the anti-1,4-elimination of the C-3 phosphate and the C-6 proR hydrogen from 5-enolpyruvylshikimate-3-phosphate (EPSP) to yield chorismate, which is the branch point compound that serves as the starting substrate for the three terminal pathways of aromatic amino acid biosynthesis. This reaction introduces a second double bond into the aromatic ring system. This Alkaliphilus oremlandii (strain OhILAs) (Clostridium oremlandii (strain OhILAs)) protein is Chorismate synthase.